A 695-amino-acid polypeptide reads, in one-letter code: MARQVSLKDTRNIGIMAHIDAGKTTVTERILYYSGKIHKIGDTHDGAAQMDWMVQEQERGITITSAATTCFWKGNRINIIDTPGHVDFTVEVERSLRVLDGSVALFDAKSGVEPQSETVWRQADKYGVPRICFINKMDATGADYFMSVDTIRERLRANAVPIEIPIGAEDKFVGVVDLITMKANIYKNELGTEFTVEEIPSDLVEVAEKYRAELLENIAEHDEELMEKYLEGEELTEEEIKRAIRTATIANAMNPVLCGSAYKNKGVQPLLDAIVDYMPAPIDVPDIKGVDPQTDEPTTRKSSDEEPFAALAFKIATDPYVGKLAFTRVYSGTVESGSYVYNSTKGKRERIGRILMMHANKREEIDKAYAGDIVAIIGLKDTTTGDTLCDMDSEVILENMEFPDPVISVAIEPKTKASQEKMGIALAKLAEEDPTFRTYTDEETGDTIISGMGELHLEIIVDRLLREFKVEANIGNPQVAYRESITQAAEAQGKYVKQSGGRGQYGDCTLRVEPLDNPEESNGIEFVNAIVGGAIPKEYIPSVQAGAEEAAQTGILGGYPMLDMKITLLDGSYHDVDSSEMAYKIAGSMGFRAAVAKAKPILLEPAMKVEITTPDEYLGDVMGDVSSRRGKIDGMNPKNGVHVLDAFIPLAEMFGYATDLRSKTQGRATYSMQFDHYEQVPNSISEEVIGKKNNK.

A tr-type G domain is found at 8 to 282 (KDTRNIGIMA…AIVDYMPAPI (275 aa)). Residues 17–24 (AHIDAGKT), 81–85 (DTPGH), and 135–138 (NKMD) each bind GTP. Residues 285-304 (PDIKGVDPQTDEPTTRKSSD) are disordered.

Belongs to the TRAFAC class translation factor GTPase superfamily. Classic translation factor GTPase family. EF-G/EF-2 subfamily.

The protein resides in the cytoplasm. Catalyzes the GTP-dependent ribosomal translocation step during translation elongation. During this step, the ribosome changes from the pre-translocational (PRE) to the post-translocational (POST) state as the newly formed A-site-bound peptidyl-tRNA and P-site-bound deacylated tRNA move to the P and E sites, respectively. Catalyzes the coordinated movement of the two tRNA molecules, the mRNA and conformational changes in the ribosome. The chain is Elongation factor G from Finegoldia magna (strain ATCC 29328 / DSM 20472 / WAL 2508) (Peptostreptococcus magnus).